The following is a 434-amino-acid chain: Enolase (434 aa).

Q163 contributes to the (2R)-2-phosphoglycerate binding site. Catalysis depends on E205, which acts as the Proton donor. Mg(2+) contacts are provided by D243, E291, and D318. Residues K343, R372, S373, and K394 each coordinate (2R)-2-phosphoglycerate. K343 serves as the catalytic Proton acceptor.

This sequence belongs to the enolase family. It depends on Mg(2+) as a cofactor.

The protein resides in the cytoplasm. Its subcellular location is the secreted. The protein localises to the cell surface. The enzyme catalyses (2R)-2-phosphoglycerate = phosphoenolpyruvate + H2O. It participates in carbohydrate degradation; glycolysis; pyruvate from D-glyceraldehyde 3-phosphate: step 4/5. Catalyzes the reversible conversion of 2-phosphoglycerate (2-PG) into phosphoenolpyruvate (PEP). It is essential for the degradation of carbohydrates via glycolysis. The polypeptide is Enolase (Fusobacterium nucleatum subsp. nucleatum (strain ATCC 25586 / DSM 15643 / BCRC 10681 / CIP 101130 / JCM 8532 / KCTC 2640 / LMG 13131 / VPI 4355)).